We begin with the raw amino-acid sequence, 102 residues long: FGSLLGLCLATQILTGLFLAMHYTSDISTAFSSVTHICRDVNYGWLIRNIHANGASFFFICIYLHIGRGLYYGSYLYKETWNIGVVLLLLVMMTAFVGYVLP.

3 helical membrane passes run 1–21 (FGSL…FLAM), 45–66 (WLIR…YLHI), and 81–101 (WNIG…GYVL). His-51 and His-65 together coordinate heme b.

It belongs to the cytochrome b family. The cytochrome bc1 complex contains 3 respiratory subunits (MT-CYB, CYC1 and UQCRFS1), 2 core proteins (UQCRC1 and UQCRC2) and probably 6 low-molecular weight proteins. The cofactor is heme b.

It localises to the mitochondrion inner membrane. Functionally, component of the ubiquinol-cytochrome c reductase complex (complex III or cytochrome b-c1 complex) that is part of the mitochondrial respiratory chain. The b-c1 complex mediates electron transfer from ubiquinol to cytochrome c. Contributes to the generation of a proton gradient across the mitochondrial membrane that is then used for ATP synthesis. In Megalops atlanticus (Tarpon), this protein is Cytochrome b (mt-cyb).